A 285-amino-acid chain; its full sequence is 4-hydroxybenzoate octaprenyltransferase (285 aa).

The next 7 membrane-spanning stretches (helical) occupy residues 17–37, 41–61, 92–112, 135–155, 158–178, 216–236, and 263–283; these read PVGI…AGAG, PKVL…GCVI, LLLF…LNPL, HWPQ…AFAA, GTVP…ATVY, ALLL…YYYL, and AFLN…LHYL.

Belongs to the UbiA prenyltransferase family. The cofactor is Mg(2+).

It is found in the cell inner membrane. The catalysed reaction is all-trans-octaprenyl diphosphate + 4-hydroxybenzoate = 4-hydroxy-3-(all-trans-octaprenyl)benzoate + diphosphate. It functions in the pathway cofactor biosynthesis; ubiquinone biosynthesis. Catalyzes the prenylation of para-hydroxybenzoate (PHB) with an all-trans polyprenyl group. Mediates the second step in the final reaction sequence of ubiquinone-8 (UQ-8) biosynthesis, which is the condensation of the polyisoprenoid side chain with PHB, generating the first membrane-bound Q intermediate 3-octaprenyl-4-hydroxybenzoate. The polypeptide is 4-hydroxybenzoate octaprenyltransferase (Nitrosococcus oceani (strain ATCC 19707 / BCRC 17464 / JCM 30415 / NCIMB 11848 / C-107)).